The chain runs to 653 residues: Transcription factor Ken 1 (653 aa).

Positions 35 to 103 constitute a BTB domain; the sequence is TDLLLICDGK…LYSGQVYVRS (69 aa). Disordered regions lie at residues 126 to 215, 234 to 305, 429 to 451, and 512 to 534; these read NSDG…DRDR, NNHP…SDDA, LSNNNNSSSNNNNNNNRIRPPSA, and ELSARASAAGGGGGGSGGNGSGS. Positions 145 to 157 are enriched in polar residues; sequence NRNTEGITGSSVV. A compositionally biased stretch (basic residues) spans 251 to 272; the sequence is GHHHHHHHHHHHRQLHQIKTRS. The segment covering 286–299 has biased composition (polar residues); that stretch reads SDPVNLSIVKQQQD. Positions 430 to 444 are enriched in low complexity; that stretch reads SNNNNSSSNNNNNNN. The span at 520-534 shows a compositional bias: gly residues; that stretch reads AGGGGGGSGGNGSGS. 3 consecutive C2H2-type zinc fingers follow at residues 555 to 577, 583 to 606, and 619 to 641; these read YRCEYCGKTFGMSWNLKTHLRVH, FACRLCVAMFKQKAHLLKHLCSVH, and YTCCFCSLVFETLQELVRHLSGH.

Its subcellular location is the nucleus. Transcription factor required for terminalia development. Negative regulator of the JAK/STAT pathway: represses JAK/STAT-dependent expression of ventral veins lacking (vvl) in the posterior spiracles. The protein is Transcription factor Ken 1 of Culex quinquefasciatus (Southern house mosquito).